The chain runs to 383 residues: D-alanine--D-alanine ligase (383 aa).

One can recognise an ATP-grasp domain in the interval 164 to 373 (KLAFQAAGLE…YSALIDELIT (210 aa)). 196–251 (VAELGFPVFVKPARAGSSFGITRVDEPSQLDAAIATAREHDLKLVVEAGIDGREIE) provides a ligand contact to ATP. Residues Asp327, Glu340, and Asn342 each contribute to the Mg(2+) site.

Belongs to the D-alanine--D-alanine ligase family. Requires Mg(2+) as cofactor. The cofactor is Mn(2+).

The protein localises to the cytoplasm. It catalyses the reaction 2 D-alanine + ATP = D-alanyl-D-alanine + ADP + phosphate + H(+). Its pathway is cell wall biogenesis; peptidoglycan biosynthesis. Its function is as follows. Cell wall formation. The polypeptide is D-alanine--D-alanine ligase (Kocuria rhizophila (strain ATCC 9341 / DSM 348 / NBRC 103217 / DC2201)).